The sequence spans 265 residues: Neuronal membrane glycoprotein M6-b (265 aa).

A helical transmembrane segment spans residues Gly-31–Phe-51. The N-linked (GlcNAc...) asparagine glycan is linked to Asn-73. 2 helical membrane passes run Val-90 to Phe-110 and Phe-136 to Val-156. The N-linked (GlcNAc...) asparagine glycan is linked to Asn-177. A helical transmembrane segment spans residues Leu-224 to Met-244. At Ser-257 the chain carries Phosphoserine.

It belongs to the myelin proteolipid protein family. In terms of assembly, interacts with SERT. Highly expressed in the ventral medullary surface, moderately in the cerebral cortex and cerebellum, poorly in lung and kidney, and not at all in heart, skeletal muscle, liver, stomach or stomach.

The protein localises to the membrane. It localises to the cell membrane. Functionally, may be involved in neural development. Involved in regulation of osteoblast function and bone formation. Involved in matrix vesicle release by osteoblasts; this function seems to involve maintenance of the actin cytoskeleton. May be involved in cellular trafficking of SERT and thereby in regulation of serotonin uptake. This chain is Neuronal membrane glycoprotein M6-b (Gpm6b), found in Rattus norvegicus (Rat).